Consider the following 282-residue polypeptide: tRNA pseudouridine synthase A (282 aa).

Catalysis depends on Asp-51, which acts as the Nucleophile. Tyr-109 is a binding site for substrate.

Belongs to the tRNA pseudouridine synthase TruA family. In terms of assembly, homodimer.

It carries out the reaction uridine(38/39/40) in tRNA = pseudouridine(38/39/40) in tRNA. In terms of biological role, formation of pseudouridine at positions 38, 39 and 40 in the anticodon stem and loop of transfer RNAs. This is tRNA pseudouridine synthase A from Delftia acidovorans (strain DSM 14801 / SPH-1).